The following is an 87-amino-acid chain: UPF0250 protein NT01EI_2946 (87 aa).

It belongs to the UPF0250 family.

The polypeptide is UPF0250 protein NT01EI_2946 (Edwardsiella ictaluri (strain 93-146)).